The primary structure comprises 102 residues: Small ribosomal subunit protein uS10 (102 aa).

This sequence belongs to the universal ribosomal protein uS10 family. In terms of assembly, part of the 30S ribosomal subunit.

Functionally, involved in the binding of tRNA to the ribosomes. This Thermotoga maritima (strain ATCC 43589 / DSM 3109 / JCM 10099 / NBRC 100826 / MSB8) protein is Small ribosomal subunit protein uS10.